We begin with the raw amino-acid sequence, 830 residues long: Leucine--tRNA ligase (830 aa).

A 'HIGH' region motif is present at residues Pro34–His44. The 'KMSKS' region motif lies at Lys592–Ser596. Lys595 contributes to the ATP binding site.

It belongs to the class-I aminoacyl-tRNA synthetase family.

Its subcellular location is the cytoplasm. The catalysed reaction is tRNA(Leu) + L-leucine + ATP = L-leucyl-tRNA(Leu) + AMP + diphosphate. The protein is Leucine--tRNA ligase of Ehrlichia ruminantium (strain Welgevonden).